The sequence spans 1012 residues: Structural polyprotein (1012 aa).

Asp-30 provides a ligand contact to a divalent metal cation. The Peptidase S50 domain maps to 513-755; it reads ADKGYEVVAN…AGRQYHLAMA (243 aa). The Nucleophile role is filled by Ser-652. Lys-692 is a catalytic residue. 2 disordered regions span residues 837–857 and 968–1012; these read GYGV…KDTR and TAME…EDLE. The span at 975 to 986 shows a compositional bias: basic residues; it reads RNPRRAPPKPKP. The interval 1003–1012 is interaction with VP1 protein; the sequence is IRTVSDEDLE.

In terms of assembly, homotrimer. A central divalent metal stabilizes the VP2 trimer. Interacts with host ITGA4/ITGB1. As to quaternary structure, homodimer. Interacts (via C-terminus) with VP1 in the cytoplasm. Interacts with VP2. Specific enzymatic cleavages yield mature proteins. The capsid assembly seems to be regulated by polyprotein processing. The protease VP4 cleaves itself off the polyprotein, thus releasing pre-VP2 and VP3 within the infected cell. During capsid assembly, the C-terminus of pre-VP2 is further processed by VP4, giving rise to VP2, the external capsid protein and three small peptides that all stay closely associated with the capsid.

The protein localises to the virion. The protein resides in the host cytoplasm. Capsid protein VP2 self assembles to form an icosahedral capsid with a T=13 symmetry, about 70 nm in diameter, and consisting of 260 VP2 trimers. The capsid encapsulates the genomic dsRNA. VP2 is also involved in attachment and entry into the host cell by interacting with host ITGA4/ITGB1. Functionally, the precursor of VP2 plays an important role in capsid assembly. First, pre-VP2 and VP2 oligomers assemble to form a procapsid. Then, the pre-VP2 intermediates may be processed into VP2 proteins by proteolytic cleavage mediated by VP4 to obtain the mature virion. The final capsid is composed of pentamers and hexamers but VP2 has a natural tendency to assemble into all-pentameric structures. Therefore pre-VP2 may be required to allow formation of the hexameric structures. Its function is as follows. Protease VP4 is a serine protease that cleaves the polyprotein into its final products. Pre-VP2 is first partially cleaved, and may be completely processed by VP4 upon capsid maturation. In terms of biological role, capsid protein VP3 plays a key role in virion assembly by providing a scaffold for the capsid made of VP2. May self-assemble to form a T=4-like icosahedral inner-capsid composed of at least 180 trimers. Plays a role in genomic RNA packaging by recruiting VP1 into the capsid and interacting with the dsRNA genome segments to form a ribonucleoprotein complex. Additionally, the interaction of the VP3 C-terminal tail with VP1 removes the inherent structural blockade of the polymerase active site. Thus, VP3 can also function as a transcriptional activator. Structural peptide 1 is a small peptide derived from pre-VP2 C-terminus. It destabilizes and perforates cell membranes, suggesting a role during entry. Functionally, structural peptide 2 is a small peptide derived from pVP2 C-terminus. It is not essential for the virus viability, but viral growth is affected when missing. Its function is as follows. Structural peptide 3 is a small peptide derived from pVP2 C-terminus. It is not essential for the virus viability, but viral growth is affected when missing. In terms of biological role, structural peptide 4 is a small peptide derived from pVP2 C-terminus. It is essential for the virus viability. The chain is Structural polyprotein from Gallus gallus (Chicken).